The following is a 310-amino-acid chain: Low affinity immunoglobulin gamma Fc region receptor II-b (310 aa).

Positions 1–42 (MGILSFLPVLATESDWADCKSPQPWGHMLLWTAVLFLAPVAG) are cleaved as a signal peptide. Over 43–217 (TPAAPPKAVL…KPVTITVQAP (175 aa)) the chain is Extracellular. 2 consecutive Ig-like C2-type domains span residues 48 to 127 (PKAV…VHLT) and 131 to 213 (EWLV…VTIT). Cystine bridges form between Cys-71-Cys-113 and Cys-152-Cys-196. Residues Asn-106, Asn-180, and Asn-187 are each glycosylated (N-linked (GlcNAc...) asparagine). Residues 218-240 (SSSPMGIIVAVVTGIAVAAIVAA) traverse the membrane as a helical segment. Topologically, residues 241–310 (VVALIYCRKK…LEEPDDQNRI (70 aa)) are cytoplasmic. An ITIM motif motif is present at residues 290–295 (ITYSLL). Phosphotyrosine; by SRC-type Tyr-kinases is present on Tyr-292.

Interacts with INPP5D/SHIP1. Interacts with FGR. Interacts with LYN. As to quaternary structure, (Microbial infection) Isoform IIB1 interacts with measles virus protein N. Protein N is released in the blood following lysis of measles infected cells. This interaction presumably block inflammatory immune response. Phosphorylated by the SRC-type Tyr-kinases LYN and BLK. In terms of tissue distribution, is the most broadly distributed Fc-gamma-receptor. Expressed in monocyte, neutrophils, macrophages, basophils, eosinophils, Langerhans cells, B-cells, platelets cells and placenta (endothelial cells). Not detected in natural killer cells.

It is found in the cell membrane. In terms of biological role, receptor for the Fc region of complexed or aggregated immunoglobulins gamma. Low affinity receptor. Involved in a variety of effector and regulatory functions such as phagocytosis of immune complexes and modulation of antibody production by B-cells. Binding to this receptor results in down-modulation of previous state of cell activation triggered via antigen receptors on B-cells (BCR), T-cells (TCR) or via another Fc receptor. Isoform IIB1 fails to mediate endocytosis or phagocytosis. Isoform IIB2 does not trigger phagocytosis. This chain is Low affinity immunoglobulin gamma Fc region receptor II-b (FCGR2B), found in Homo sapiens (Human).